Reading from the N-terminus, the 56-residue chain is Large ribosomal subunit protein bL33 (56 aa).

This sequence belongs to the bacterial ribosomal protein bL33 family.

The protein is Large ribosomal subunit protein bL33 of Actinobacillus pleuropneumoniae serotype 5b (strain L20).